The chain runs to 249 residues: DNA polymerase sliding clamp (249 aa).

The protein belongs to the PCNA family. Homotrimer. The subunits circularize to form a toroid; DNA passes through its center. Replication factor C (RFC) is required to load the toroid on the DNA.

Sliding clamp subunit that acts as a moving platform for DNA processing. Responsible for tethering the catalytic subunit of DNA polymerase and other proteins to DNA during high-speed replication. This Thermococcus fumicolans protein is DNA polymerase sliding clamp.